Consider the following 706-residue polypeptide: Polycomb protein SCMH1 (706 aa).

MBT repeat units lie at residues 28-126 (FTWD…LQPP) and 134-235 (SSWP…LQPP). Disordered regions lie at residues 233–350 (QPPG…TVPS) and 576–595 (GSDRHLESRDPPRLSGRDPS). 2 stretches are compositionally biased toward basic residues: residues 272–283 (RGRKPGKKRGRT) and 304–319 (FPKKRGPKPGSKRKPR). Over residues 329 to 340 (PTTSTPEPDTST) the composition is skewed to low complexity. The span at 576–591 (GSDRHLESRDPPRLSG) shows a compositional bias: basic and acidic residues. The 66-residue stretch at 597-662 (WTVEDVMQFV…SFHIDRLKQV (66 aa)) folds into the SAM domain.

Belongs to the SCM family. As to quaternary structure, associates with a PRC1-like complex. Interacts with the SAM domain of PHC1 via its SAM domain in vitro. As to expression, most abundant in testis. Moderate levels detected in heart, brain, lung, liver, skeletal muscle and kidney and lower levels in spleen.

The protein localises to the nucleus. Associates with Polycomb group (PcG) multiprotein complexes; the complex class is required to maintain the transcriptionally repressive state of some genes. This Mus musculus (Mouse) protein is Polycomb protein SCMH1.